Here is a 571-residue protein sequence, read N- to C-terminus: 2-succinyl-5-enolpyruvyl-6-hydroxy-3-cyclohexene-1-carboxylate synthase (571 aa).

It belongs to the TPP enzyme family. MenD subfamily. Homodimer. Mg(2+) serves as cofactor. It depends on Mn(2+) as a cofactor. The cofactor is thiamine diphosphate.

The enzyme catalyses isochorismate + 2-oxoglutarate + H(+) = 5-enolpyruvoyl-6-hydroxy-2-succinyl-cyclohex-3-ene-1-carboxylate + CO2. The protein operates within quinol/quinone metabolism; 1,4-dihydroxy-2-naphthoate biosynthesis; 1,4-dihydroxy-2-naphthoate from chorismate: step 2/7. It functions in the pathway quinol/quinone metabolism; menaquinone biosynthesis. Functionally, catalyzes the thiamine diphosphate-dependent decarboxylation of 2-oxoglutarate and the subsequent addition of the resulting succinic semialdehyde-thiamine pyrophosphate anion to isochorismate to yield 2-succinyl-5-enolpyruvyl-6-hydroxy-3-cyclohexene-1-carboxylate (SEPHCHC). The polypeptide is 2-succinyl-5-enolpyruvyl-6-hydroxy-3-cyclohexene-1-carboxylate synthase (Vibrio parahaemolyticus serotype O3:K6 (strain RIMD 2210633)).